Here is a 431-residue protein sequence, read N- to C-terminus: Divergent protein kinase domain 1B (431 aa).

The Cytoplasmic segment spans residues 1–30 (MRRLRRLAHLVLFCPFSKRLQGRLPGLRVR). The May mediate ER retention signature appears at 5 to 6 (RR). Residues 31 to 51 (CIFLAWLGVFAGSWLVYVHYS) traverse the membrane as a helical segment. Residues 52-431 (SYSERCRGHV…WKKISNTKYS (380 aa)) lie on the Lumenal side of the membrane. 2 disulfides stabilise this stretch: Cys57–Cys94 and Cys62–Cys117.

This sequence belongs to the DIPK family. Among the many cysteines in the lumenal domain, most are probably involved in disulfide bonds.

The protein localises to the endoplasmic reticulum membrane. The chain is Divergent protein kinase domain 1B from Homo sapiens (Human).